Here is an 888-residue protein sequence, read N- to C-terminus: 3-hydroxy-3-methylglutaryl-coenzyme A reductase (888 aa).

Residues 1 to 9 (MLSRLFRMH) are Cytoplasmic-facing. The chain crosses the membrane as a helical span at residues 10-39 (GLFVASHPWEVIVGTVTLTICMMSMNMFTG). Residues 40 to 56 (NNKICGWNYECPKLEED) lie on the Lumenal side of the membrane. A helical membrane pass occupies residues 57–78 (VLSSDIIILTITRCIAILYIYF). The region spanning 61-218 (DIIILTITRC…MTFFPACVSL (158 aa)) is the SSD domain. The INSIG-binding motif signature appears at 75-78 (YIYF). The Cytoplasmic portion of the chain corresponds to 79 to 89 (QFQNLRQLGSK). Residue lysine 89 forms a Glycyl lysine isopeptide (Lys-Gly) (interchain with G-Cter in ubiquitin) linkage. Residues 90-114 (YILGIAGLFTIFSSFVFSTVVIHFL) form a helical membrane-spanning segment. The Lumenal segment spans residues 115 to 123 (DKELTGLNE). A helical membrane pass occupies residues 124 to 149 (ALPFFLLLVDLSRASALAKFALSSNS). At 150–159 (QDEVRENIAR) the chain is on the cytoplasmic side. The chain crosses the membrane as a helical span at residues 160 to 187 (GMAILGPTFTLDALVECLVIGVGTMSGV). The Lumenal segment spans residues 188-191 (RQLE). Residues 192 to 220 (IMCCFGCMSVLANYFVFMTFFPACVSLVL) traverse the membrane as a helical segment. Topologically, residues 221–248 (ELSRESREGRPIWQLSHFARVLEEEENK) are cytoplasmic. Residue lysine 248 forms a Glycyl lysine isopeptide (Lys-Gly) (interchain with G-Cter in ubiquitin) linkage. Residues 249–275 (PNPVTQRVKMIMSLGLVLVHAHSRWIA) traverse the membrane as a helical segment. Topologically, residues 276–314 (DPSPQNSTADNSKVSLGLDENVSKRIEPSVSLWQFYLSK) are lumenal. 2 N-linked (GlcNAc...) asparagine glycosylation sites follow: asparagine 281 and asparagine 296. A helical transmembrane segment spans residues 315 to 339 (MISMDIEQVITLSLALLLAVKYIFF). The Cytoplasmic portion of the chain corresponds to 340 to 888 (EQAETESTLS…LQGTCTKKAA (549 aa)). Residues glutamate 559, lysine 691, and aspartate 767 each act as charge relay system in the active site. Residue histidine 866 is the Proton donor of the active site. The residue at position 872 (serine 872) is a Phosphoserine; by AMPK.

Belongs to the HMG-CoA reductase family. In terms of assembly, homotetramer. Homodimer. Interacts (via its SSD) with INSIG1; the interaction, accelerated by sterols, leads to the recruitment of HMGCR to AMFR/gp78 for its ubiquitination by the sterol-mediated ERAD pathway. Interacts with UBIAD1. Post-translationally, undergoes sterol-mediated ubiquitination and ER-associated degradation (ERAD). Accumulation of sterols in the endoplasmic reticulum (ER) membrane, triggers binding of the reductase to the ER membrane protein INSIG1 or INSIG2. The INSIG1 binding leads to the recruitment of the ubiquitin ligase, AMFR/gp78, RNF139 or RNF145, initiating ubiquitination of the reductase. The ubiquitinated reductase is then extracted from the ER membrane and delivered to cytosolic 26S proteosomes by a mechanism probably mediated by the ATPase Valosin-containing protein VCP/p97. The INSIG2-binding leads to the recruitment of the ubiquitin ligase RNF139, initiating ubiquitination of the reductase. Lys-248 is the main site of ubiquitination. Ubiquitination is enhanced by the presence of a geranylgeranylated protein. N-glycosylated. Deglycosylated by NGLY1 on release from the endoplasmic reticulum (ER) in a sterol-mediated manner. In terms of processing, phosphorylated. Phosphorylation at Ser-872 reduces the catalytic activity.

It localises to the endoplasmic reticulum membrane. The protein resides in the peroxisome membrane. It catalyses the reaction (R)-mevalonate + 2 NADP(+) + CoA = (3S)-3-hydroxy-3-methylglutaryl-CoA + 2 NADPH + 2 H(+). It participates in metabolic intermediate biosynthesis; (R)-mevalonate biosynthesis; (R)-mevalonate from acetyl-CoA: step 3/3. With respect to regulation, regulated by a negative feedback mechanism through sterols and non-sterol metabolites derived from mevalonate. Phosphorylation at Ser-872 down-regulates the catalytic activity. Functionally, catalyzes the conversion of (3S)-hydroxy-3-methylglutaryl-CoA (HMG-CoA) to mevalonic acid, the rate-limiting step in the synthesis of cholesterol and other isoprenoids, thus plays a critical role in cellular cholesterol homeostasis. The sequence is that of 3-hydroxy-3-methylglutaryl-coenzyme A reductase (HMGCR) from Bos taurus (Bovine).